We begin with the raw amino-acid sequence, 517 residues long: FERM domain-containing protein 5 (517 aa).

Positions 17–298 (YSCTVRLLDD…ENQAFYKLEK (282 aa)) constitute an FERM domain. The tract at residues 308–353 (SNLFFKGSRFRYSGRVAKEVMESSAKIKREPPEIHRAGMVPSRSCP) is interaction with ROCK1. The disordered stretch occupies residues 344-367 (AGMVPSRSCPSITHGPRLSSVPRT). Phosphoserine is present on Ser375. Disordered stretches follow at residues 385–408 (DSAH…VRSS) and 485–517 (GHGG…VPLD). A compositionally biased stretch (polar residues) spans 388 to 398 (HSTPVRSSSHG). Residues 498–517 (KGPQLQQQQWKGWGKSVPLD) are compositionally biased toward low complexity.

Interacts with CTNND1, ITGB5 (via cytoplasmic domain) and ROCK1.

The protein resides in the cell junction. The protein localises to the adherens junction. In terms of biological role, may be involved in regulation of cell migration. May regulate cell-matrix interactions via its interaction with ITGB5 and modifying ITGB5 cytoplasmic tail interactions such as with FERMT2 and TLN1. May regulate ROCK1 kinase activity possibly involved in regulation of actin stress fiber formation. This chain is FERM domain-containing protein 5 (Frmd5), found in Mus musculus (Mouse).